The following is a 219-amino-acid chain: 23.6 kDa heat shock protein, mitochondrial (219 aa).

The N-terminal 29 residues, 1–29, are a transit peptide targeting the mitochondrion; it reads MALARQCLSKRLAAGCALARPLHAASPVA. Residues 104-219 form the sHSP domain; it reads QVAETLTRPL…KRSVTEVKVR (116 aa).

This sequence belongs to the small heat shock protein (HSP20) family. In terms of assembly, may form oligomeric structures.

The protein localises to the mitochondrion. In Oryza sativa subsp. japonica (Rice), this protein is 23.6 kDa heat shock protein, mitochondrial (HSP23.6).